The sequence spans 99 residues: NADH-quinone oxidoreductase subunit K (99 aa).

Helical transmembrane passes span 3-23, 28-48, and 59-79; these read PDNYLYLSALLFTIGAAGVLL, IVMFMCIELMLNAANLAFVTF, and VVAFFTMVVAACEVVIGLAII.

Belongs to the complex I subunit 4L family. In terms of assembly, NDH-1 is composed of 14 different subunits. Subunits NuoA, H, J, K, L, M, N constitute the membrane sector of the complex.

The protein localises to the cell membrane. It carries out the reaction a quinone + NADH + 5 H(+)(in) = a quinol + NAD(+) + 4 H(+)(out). Functionally, NDH-1 shuttles electrons from NADH, via FMN and iron-sulfur (Fe-S) centers, to quinones in the respiratory chain. The immediate electron acceptor for the enzyme in this species is believed to be a menaquinone. Couples the redox reaction to proton translocation (for every two electrons transferred, four hydrogen ions are translocated across the cytoplasmic membrane), and thus conserves the redox energy in a proton gradient. The chain is NADH-quinone oxidoreductase subunit K from Mycolicibacterium vanbaalenii (strain DSM 7251 / JCM 13017 / BCRC 16820 / KCTC 9966 / NRRL B-24157 / PYR-1) (Mycobacterium vanbaalenii).